A 481-amino-acid chain; its full sequence is uncharacterized protein (481 aa).

10 helical membrane passes run 30–50 (TIII…FVQF), 96–116 (AIAL…FIGM), 154–174 (CMAV…FNSV), 196–216 (ISLV…IAII), 220–240 (LVPM…GMHI), 250–270 (IVQS…ALVS), 311–331 (MLGV…IILL), 354–374 (IGEF…YSSI), 391–411 (KPWL…FGAV), and 424–444 (VMAV…PIVW).

It belongs to the alanine or glycine:cation symporter (AGCS) (TC 2.A.25) family.

Its subcellular location is the cell inner membrane. This is an uncharacterized protein from Haemophilus influenzae (strain ATCC 51907 / DSM 11121 / KW20 / Rd).